The sequence spans 316 residues: HPr kinase/phosphorylase (316 aa).

Catalysis depends on residues His143 and Lys164. 158–165 (GEAGSGKS) contributes to the ATP binding site. Ser165 contacts Mg(2+). Catalysis depends on Asp182, which acts as the Proton acceptor; for phosphorylation activity. Proton donor; for dephosphorylation activity. The important for the catalytic mechanism of both phosphorylation and dephosphorylation stretch occupies residues 206–215 (LEVRGLGVLN). Glu207 contributes to the Mg(2+) binding site. Arg251 is a catalytic residue. An important for the catalytic mechanism of dephosphorylation region spans residues 272–277 (PVMPGR).

It belongs to the HPrK/P family. Homohexamer. Requires Mg(2+) as cofactor.

The enzyme catalyses [HPr protein]-L-serine + ATP = [HPr protein]-O-phospho-L-serine + ADP + H(+). It carries out the reaction [HPr protein]-O-phospho-L-serine + phosphate + H(+) = [HPr protein]-L-serine + diphosphate. Its function is as follows. Catalyzes the ATP- as well as the pyrophosphate-dependent phosphorylation of a specific serine residue in HPr, a phosphocarrier protein of the phosphoenolpyruvate-dependent sugar phosphotransferase system (PTS). HprK/P also catalyzes the pyrophosphate-producing, inorganic phosphate-dependent dephosphorylation (phosphorolysis) of seryl-phosphorylated HPr (P-Ser-HPr). The protein is HPr kinase/phosphorylase of Xylella fastidiosa (strain 9a5c).